The following is a 437-amino-acid chain: Argininosuccinate lyase (437 aa).

Belongs to the lyase 1 family. Argininosuccinate lyase subfamily.

The protein localises to the cytoplasm. It catalyses the reaction 2-(N(omega)-L-arginino)succinate = fumarate + L-arginine. It participates in amino-acid biosynthesis; L-arginine biosynthesis; L-arginine from L-ornithine and carbamoyl phosphate: step 3/3. This Clostridium novyi (strain NT) protein is Argininosuccinate lyase.